The following is a 127-amino-acid chain: Large ribosomal subunit protein bL12 (127 aa).

It belongs to the bacterial ribosomal protein bL12 family. Homodimer. Part of the ribosomal stalk of the 50S ribosomal subunit. Forms a multimeric L10(L12)X complex, where L10 forms an elongated spine to which 2 to 4 L12 dimers bind in a sequential fashion. Binds GTP-bound translation factors.

Functionally, forms part of the ribosomal stalk which helps the ribosome interact with GTP-bound translation factors. Is thus essential for accurate translation. The sequence is that of Large ribosomal subunit protein bL12 from Carboxydothermus hydrogenoformans (strain ATCC BAA-161 / DSM 6008 / Z-2901).